We begin with the raw amino-acid sequence, 418 residues long: MSGASLLKETGPREVFCGLTSIVWLHRRMPDAFFLVVGSRTCAHLIQSAAGVMIFAEPRFGTAILEERDLAGLADAHEELDRVVKNLLTRRPEIRTLFLVGSCPSEVIKIDLARAAERLNSQFNGKVTILNYSGSGIETTFTQGEDGALKAFVPLMPSSDKKQLLLVGTLANAVEDRLITIFKRLGIENVDSFPPRQSTELPSIGPETKVLLTQPYLTDTARVLKDRGAEILPAPFPLGVEGSRLWIEAAAKSFNVDQSLVTSTLEPLILRARKALKPYIEKLTGKKLFLLPESQLEIPLARFLHMECGMELLEIGTPYLNRDMMKPELDLLPDKTRIVEGQHVEKQLDRVRKNQPDLVVCGMGLANPLEAEGFSTKWSIEMVFSPIHGIDQASDLAELFSRPLHRHDLLNTKQLTST.

Residues Cys17, Cys42, and Cys103 each contribute to the [4Fe-4S] cluster site.

This sequence belongs to the BchN/ChlN family. As to quaternary structure, protochlorophyllide reductase is composed of three subunits; ChlL, ChlN and ChlB. Forms a heterotetramer of two ChlB and two ChlN subunits. Requires [4Fe-4S] cluster as cofactor.

It carries out the reaction chlorophyllide a + oxidized 2[4Fe-4S]-[ferredoxin] + 2 ADP + 2 phosphate = protochlorophyllide a + reduced 2[4Fe-4S]-[ferredoxin] + 2 ATP + 2 H2O. Its pathway is porphyrin-containing compound metabolism; chlorophyll biosynthesis (light-independent). Its function is as follows. Component of the dark-operative protochlorophyllide reductase (DPOR) that uses Mg-ATP and reduced ferredoxin to reduce ring D of protochlorophyllide (Pchlide) to form chlorophyllide a (Chlide). This reaction is light-independent. The NB-protein (ChlN-ChlB) is the catalytic component of the complex. The polypeptide is Light-independent protochlorophyllide reductase subunit N (Prochlorococcus marinus (strain MIT 9211)).